A 437-amino-acid polypeptide reads, in one-letter code: Eukaryotic peptide chain release factor subunit 1 (437 aa).

The NIKS motif; plays an important role in translational termination motif lies at 61–64; the sequence is NIKS.

The protein belongs to the eukaryotic release factor 1 family. As to quaternary structure, component of the eRF1-eRF3-GTP ternary complex, composed of ETF1/ERF1 and eRF3 (GSPT1/ERF3A or GSPT2/ERF3B) and GTP.

The protein resides in the cytoplasm. Functionally, component of the eRF1-eRF3-GTP ternary complex, a ternary complex that mediates translation termination in response to the termination codons. The eRF1-eRF3-GTP complex binds to a stop codon in the ribosomal A-site. ETF1/ERF1 is responsible for stop codon recognition and inducing hydrolysis of peptidyl-tRNA. Following GTP hydrolysis, eRF3 (GSPT1/ERF3A or GSPT2/ERF3B) dissociates, permitting ETF1/eRF1 to accommodate fully in the A-site, followed by hydrolysis of peptidyl-tRNA. This chain is Eukaryotic peptide chain release factor subunit 1 (etf1), found in Xenopus laevis (African clawed frog).